The chain runs to 378 residues: Ribosomal RNA large subunit methyltransferase G (378 aa).

It belongs to the methyltransferase superfamily. RlmG family.

The protein resides in the cytoplasm. The catalysed reaction is guanosine(1835) in 23S rRNA + S-adenosyl-L-methionine = N(2)-methylguanosine(1835) in 23S rRNA + S-adenosyl-L-homocysteine + H(+). In terms of biological role, specifically methylates the guanine in position 1835 (m2G1835) of 23S rRNA. This chain is Ribosomal RNA large subunit methyltransferase G, found in Salmonella gallinarum (strain 287/91 / NCTC 13346).